Reading from the N-terminus, the 281-residue chain is MITSAHIDDIRTQVRAWHAKGETVAFVPTMGNLHQGHITLVKEAAKKCDHVVVSIFVNPMQFGQNEDLDAYPRTLEADSQALTAAGAELLFTPTPTVIYPKGLAQQTYVEVPGISDVLCGASRPGHFRGVATVVCKLFNIVQPDVAFFGNKDYQQLLVIRTMVEDLSLPIEIIGVDTIREASGLAMSSRNGYLTAEEKAAAPALKKAIDAMAQGIKQGVSIEQVTAEAKASLIAAGFTPDYLEVCHATTLANAETTDQALVILAAAYLGKARLIDNLRFDR.

Residue 30-37 (MGNLHQGH) participates in ATP binding. His37 functions as the Proton donor in the catalytic mechanism. A (R)-pantoate-binding site is contributed by Gln61. Residue Gln61 coordinates beta-alanine. 149–152 (GNKD) provides a ligand contact to ATP. Residue Gln155 coordinates (R)-pantoate. Residues Ile178 and 186–189 (MSSR) each bind ATP.

It belongs to the pantothenate synthetase family. Homodimer.

Its subcellular location is the cytoplasm. It catalyses the reaction (R)-pantoate + beta-alanine + ATP = (R)-pantothenate + AMP + diphosphate + H(+). It functions in the pathway cofactor biosynthesis; (R)-pantothenate biosynthesis; (R)-pantothenate from (R)-pantoate and beta-alanine: step 1/1. In terms of biological role, catalyzes the condensation of pantoate with beta-alanine in an ATP-dependent reaction via a pantoyl-adenylate intermediate. The sequence is that of Pantothenate synthetase from Shewanella sp. (strain ANA-3).